A 62-amino-acid chain; its full sequence is MDQLVFKETIWNDAFWQNPWDQGGLAVIILFITAVLLLILFAIVFGLLTSTENTQCEAGEEE.

Residues 25–45 (LAVIILFITAVLLLILFAIVF) form a helical membrane-spanning segment.

In terms of assembly, homooligomer. Can also form heterooligomers with other sarcoplasmic/endoplasmic reticulum calcium ATPase (SERCA) regulators ARLN, PLN, SLN and STRIT1/DWORF. Monomer. Interacts as a monomer with ATP2A2/SERCA2; the interaction results in inhibition of ATP2A2 Ca(2+) affinity.

Its subcellular location is the endoplasmic reticulum membrane. Inhibits the activity of the calcium ATPases ATP2A2/SERCA2 and ATP2A3/SERCA3 by decreasing their apparent affinity for Ca(2+). The sequence is that of Endoregulin from Homo sapiens (Human).